The chain runs to 486 residues: Glutamyl-tRNA(Gln) amidotransferase subunit A (486 aa).

Catalysis depends on charge relay system residues lysine 74 and serine 149. Serine 173 functions as the Acyl-ester intermediate in the catalytic mechanism.

The protein belongs to the amidase family. GatA subfamily. As to quaternary structure, heterotrimer of A, B and C subunits.

It carries out the reaction L-glutamyl-tRNA(Gln) + L-glutamine + ATP + H2O = L-glutaminyl-tRNA(Gln) + L-glutamate + ADP + phosphate + H(+). In terms of biological role, allows the formation of correctly charged Gln-tRNA(Gln) through the transamidation of misacylated Glu-tRNA(Gln) in organisms which lack glutaminyl-tRNA synthetase. The reaction takes place in the presence of glutamine and ATP through an activated gamma-phospho-Glu-tRNA(Gln). The chain is Glutamyl-tRNA(Gln) amidotransferase subunit A from Prochlorococcus marinus (strain NATL2A).